The sequence spans 381 residues: tRNA pseudouridine synthase D (381 aa).

The active-site Nucleophile is the D81. Positions 160–335 (GMPNYFGSQR…TLGSRRFFWV (176 aa)) constitute a TRUD domain.

It belongs to the pseudouridine synthase TruD family.

The catalysed reaction is uridine(13) in tRNA = pseudouridine(13) in tRNA. Functionally, responsible for synthesis of pseudouridine from uracil-13 in transfer RNAs. The sequence is that of tRNA pseudouridine synthase D from Helicobacter acinonychis (strain Sheeba).